Here is a 323-residue protein sequence, read N- to C-terminus: Cyclin-H (323 aa).

The segment at 296–323 is disordered; that stretch reads GYEDDGYISKKPKTEEDEWTDEDFGDSL. Positions 310-323 are enriched in acidic residues; that stretch reads EEDEWTDEDFGDSL.

Belongs to the cyclin family. Cyclin C subfamily. As to quaternary structure, associates primarily with CDK7 and MAT1 to form the CAK complex. CAK can further associate with the core-TFIIH to form the TFIIH basal transcription factor.

It is found in the nucleus. Functionally, regulates CDK7, the catalytic subunit of the CDK-activating kinase (CAK) enzymatic complex. CAK activates the cyclin-associated kinases CDK1, CDK2, CDK4 and CDK6 by threonine phosphorylation. CAK complexed to the core-TFIIH basal transcription factor activates RNA polymerase II by serine phosphorylation of the repetitive C-terminal domain (CTD) of its large subunit (POLR2A), allowing its escape from the promoter and elongation of the transcripts. Involved in cell cycle control and in RNA transcription by RNA polymerase II. Its expression and activity are constant throughout the cell cycle. The chain is Cyclin-H (ccnh) from Xenopus laevis (African clawed frog).